Consider the following 485-residue polypeptide: Mitochondria-eating protein (485 aa).

The stretch at 112–210 (TSHERELNEV…SILSSESSIL (99 aa)) forms a coiled coil. Low complexity-rich tracts occupy residues 214 to 241 (LSRS…SPTS) and 471 to 485 (RSRS…TPRF). Disordered regions lie at residues 214–244 (LSRS…SAKL) and 451–485 (RSRS…TPRF).

The protein belongs to the MIEAP family.

It localises to the cytoplasm. The protein resides in the mitochondrion outer membrane. It is found in the mitochondrion matrix. Key regulator of mitochondrial quality that mediates the repairing or degradation of unhealthy mitochondria in response to mitochondrial damage. Mediator of mitochondrial protein catabolic process (also named MALM) by mediating the degradation of damaged proteins inside mitochondria by promoting the accumulation in the mitochondrial matrix of hydrolases that are characteristic of the lysosomal lumen. Also involved in mitochondrion degradation of damaged mitochondria by promoting the formation of vacuole-like structures (named MIV), which engulf and degrade unhealthy mitochondria by accumulating lysosomes. Binds cardiolipin. May form molecular condensates (non-membrane-bounded organelles) within mitochondria that compartmentalize and promote cardiolipin metabolism. The protein is Mitochondria-eating protein (spata18) of Xenopus laevis (African clawed frog).